A 126-amino-acid polypeptide reads, in one-letter code: Small ribosomal subunit protein uS12 (126 aa).

The disordered stretch occupies residues 1-29; sequence MPTIQQLIRQPRAPKKRRSKSPALQKCPQ. The residue at position 89 (Asp-89) is a 3-methylthioaspartic acid.

This sequence belongs to the universal ribosomal protein uS12 family. In terms of assembly, part of the 30S ribosomal subunit. Contacts proteins S8 and S17. May interact with IF1 in the 30S initiation complex.

In terms of biological role, with S4 and S5 plays an important role in translational accuracy. Functionally, interacts with and stabilizes bases of the 16S rRNA that are involved in tRNA selection in the A site and with the mRNA backbone. Located at the interface of the 30S and 50S subunits, it traverses the body of the 30S subunit contacting proteins on the other side and probably holding the rRNA structure together. The combined cluster of proteins S8, S12 and S17 appears to hold together the shoulder and platform of the 30S subunit. The sequence is that of Small ribosomal subunit protein uS12 from Protochlamydia amoebophila (strain UWE25).